A 207-amino-acid polypeptide reads, in one-letter code: Small ribosomal subunit protein uS4 (207 aa).

The tract at residues 31–54 (KCKLDTKPGQHGRTSGSRTSDYGN) is disordered. A compositionally biased stretch (polar residues) spans 42–53 (GRTSGSRTSDYG). In terms of domain architecture, S4 RNA-binding spans 97–158 (SRLDNVVYRM…KAKKQARITE (62 aa)).

Belongs to the universal ribosomal protein uS4 family. As to quaternary structure, part of the 30S ribosomal subunit. Contacts protein S5. The interaction surface between S4 and S5 is involved in control of translational fidelity.

In terms of biological role, one of the primary rRNA binding proteins, it binds directly to 16S rRNA where it nucleates assembly of the body of the 30S subunit. Functionally, with S5 and S12 plays an important role in translational accuracy. In Polynucleobacter asymbioticus (strain DSM 18221 / CIP 109841 / QLW-P1DMWA-1) (Polynucleobacter necessarius subsp. asymbioticus), this protein is Small ribosomal subunit protein uS4.